The sequence spans 321 residues: Phosphatidate cytidylyltransferase, mitochondrial (321 aa).

It belongs to the TAM41 family. The cofactor is Mg(2+). It depends on Co(2+) as a cofactor. Cu(2+) serves as cofactor.

It localises to the mitochondrion inner membrane. The enzyme catalyses a 1,2-diacyl-sn-glycero-3-phosphate + CTP + H(+) = a CDP-1,2-diacyl-sn-glycerol + diphosphate. Its pathway is phospholipid metabolism; CDP-diacylglycerol biosynthesis; CDP-diacylglycerol from sn-glycerol 3-phosphate: step 3/3. Catalyzes the formation of CDP-diacylglycerol (CDP-DAG) from phosphatidic acid (PA) in the mitochondrial inner membrane. Required for the biosynthesis of the dimeric phospholipid cardiolipin, which stabilizes supercomplexes of the mitochondrial respiratory chain in the mitochondrial inner membrane. This chain is Phosphatidate cytidylyltransferase, mitochondrial, found in Caenorhabditis briggsae.